We begin with the raw amino-acid sequence, 190 residues long: ITAGSSLAGTTLSGLAASGYRVTCAIQVENWTRYPLLYPTVRVNYNGAVTVNPSPILPGKKEGFSVRKPSGTATGVSGTVSWELSGAHRRFVLMWSAPFNFDHYSNWMGVGLTQPGVTRVPPGKAWFDLMYYGPTDCKGELRYERGEFYYTIDPVIYRDENFEIVGTMTNVHNALIKVVIRPTRKNWKDL.

The tract at residues 2–21 is N-terminal region; the sequence is TAGSSLAGTTLSGLAASGYR. Residues G78, S96, P98, Y131, and Y132 each contribute to the phosphocholine site. A Cell attachment site, crucial for protein stability motif is present at residues 138-140; sequence KGE.

The protein belongs to the actinoporin family. Conoidea subfamily. In terms of assembly, octamer or nonamer in membranes. Monomer in the soluble state. As to expression, expressed by the venom duct.

It is found in the secreted. The protein localises to the nematocyst. It localises to the target cell membrane. Functionally, pore-forming protein that forms pores of around 1 nm and causes cardiac stimulation and cytolysis. This is Tereporin-Ca1 from Terebra anilis (Auger snail).